The following is a 186-amino-acid chain: ADP-ribosylation factor-like protein 8B (186 aa).

Residues 1–19 (MLALISRLLDWFRSLFWKE) constitute an intramembrane region (note=Mediates targeting to membranes). Residues 29 to 35 (QYSGKTT), 71 to 75 (DIGGQ), and 130 to 133 (NKRD) each bind GTP. Lysine 141 is covalently cross-linked (Glycyl lysine isopeptide (Lys-Gly) (interchain with G-Cter in ubiquitin)).

Belongs to the small GTPase superfamily. Arf family. In terms of assembly, interacts with tubulin. Interacts with BORCS5; recruits ARL8B to lysosomes. Interacts with VPS41; the interaction mediates the recruitment of the HOPS complex to lysosomes. Interacts (GTP-bound form) with PLEKHM2 (via RUN domain); the interaction is required to recruit the motor protein kinesin-1 on lysosomes. Interacts (GTP-bound form) with PLEKHM1 (via RUN domain); the interaction is required for PLEKHM1 localization to lysosomes and for ARL8B function in delivery and degradation of endocytic and autophagic cargo in lysosomes. PLEKHM1 and PLEKHM2 compete for interaction with ARL8B. Interacts (GTP-bound form) with RUFY1; the interaction is required for RUFY1 endosomal location. When GTP-bound, interacts with RUFY3 and RUFY4, but not with RUFY1, nor RUFY2. In terms of processing, ubiquitinated at Lys-141 by RNF167, leading to its degradation.

The protein localises to the late endosome membrane. Its subcellular location is the lysosome membrane. It localises to the cytoplasm. It is found in the cytoskeleton. The protein resides in the spindle. The protein localises to the cell projection. Its subcellular location is the axon. It localises to the synapse. It is found in the cytolytic granule membrane. The protein resides in the early endosome membrane. The catalysed reaction is GTP + H2O = GDP + phosphate + H(+). In terms of biological role, small GTPase which cycles between active GTP-bound and inactive GDP-bound states. In its active state, binds to a variety of effector proteins playing a key role in the regulation of lysosomal positioning which is important for nutrient sensing, natural killer cell-mediated cytotoxicity and antigen presentation. Along with its effectors, orchestrates lysosomal transport and fusion. Localizes specifically to lysosomal membranes and mediates anterograde lysosomal motility by recruiting PLEKHM2, which in turn recruits the motor protein kinesin-1 on lysosomes. Required for lysosomal and cytolytic granule exocytosis. Critical factor involved in NK cell-mediated cytotoxicity. Drives the polarization of cytolytic granules and microtubule-organizing centers (MTOCs) toward the immune synapse between effector NK lymphocytes and target cells. In neurons, mediates the anterograde axonal long-range transport of presynaptic lysosome-related vesicles required for presynaptic biogenesis and synaptic function. Also acts as a regulator of endosome to lysosome trafficking pathways of special significance for host defense. Recruits RUFY1 onto early endosomes regulating endosomes to trans-Golgi network proteins retrieval. Regulates cargo trafficking to lysosomes by binding to PLEKHM1 and recruiting the HOPS subunit VPS41, resulting in functional assembly of the HOPS complex on lysosomal membranes. Plays an important role in cargo delivery to lysosomes for antigen presentation and microbial killing. Directs the intersection of CD1d with lipid antigens in lysosomes, and plays a role in intersecting phagosomes with lysosomes to generate phagolysosomes that kill microbes. Involved in the process of MHC II presentation. Regulates the delivery of antigens to lysosomes and the formation of MHC II-peptide complexes through the recruitment of the HOPS complex to lysosomes allowing the fusion of late endosomes to lysosomes. May play a role in chromosome segregation. This chain is ADP-ribosylation factor-like protein 8B (ARL8B), found in Macaca fascicularis (Crab-eating macaque).